The following is a 345-amino-acid chain: Phosphoribosylformylglycinamidine cyclo-ligase (345 aa).

It belongs to the AIR synthase family.

It is found in the cytoplasm. It carries out the reaction 2-formamido-N(1)-(5-O-phospho-beta-D-ribosyl)acetamidine + ATP = 5-amino-1-(5-phospho-beta-D-ribosyl)imidazole + ADP + phosphate + H(+). It participates in purine metabolism; IMP biosynthesis via de novo pathway; 5-amino-1-(5-phospho-D-ribosyl)imidazole from N(2)-formyl-N(1)-(5-phospho-D-ribosyl)glycinamide: step 2/2. In Escherichia coli (strain SE11), this protein is Phosphoribosylformylglycinamidine cyclo-ligase.